The chain runs to 502 residues: Lysine--tRNA ligase (502 aa).

The Mg(2+) site is built by Glu403 and Glu410.

The protein belongs to the class-II aminoacyl-tRNA synthetase family. Homodimer. Mg(2+) is required as a cofactor.

It localises to the cytoplasm. The enzyme catalyses tRNA(Lys) + L-lysine + ATP = L-lysyl-tRNA(Lys) + AMP + diphosphate. This is Lysine--tRNA ligase from Parasynechococcus marenigrum (strain WH8102).